The chain runs to 465 residues: Sushi repeat-containing protein SRPX2 (465 aa).

The first 23 residues, 1 to 23, serve as a signal peptide directing secretion; that stretch reads MAIQLTRRGALSLLLFLTPAVMP. Sushi domains are found at residues 69-119, 120-178, and 262-321; these read ATCY…YCRQ, MRCH…VCVD, and RRCP…VCVP. Disulfide bonds link cysteine 71–cysteine 105, cysteine 91–cysteine 117, cysteine 122–cysteine 163, and cysteine 149–cysteine 176. The HYR domain occupies 177 to 261; sequence VDIDPPKIRC…SCKFIVKVQV (85 aa). Cystine bridges form between cysteine 264–cysteine 306 and cysteine 292–cysteine 319.

In terms of assembly, forms homooligomers. Interacts with PLAUR (via the UPAR/Ly6 domains), ADAMTS4 and CTSB. Interacts with HGF; the interaction increases the mitogenic activity of HGF. Contains chondroitin sulfate chains.

It localises to the secreted. Its subcellular location is the cytoplasm. The protein resides in the cell surface. It is found in the synapse. Its function is as follows. Acts as a ligand for the urokinase plasminogen activator surface receptor. Plays a role in angiogenesis by inducing endothelial cell migration and the formation of vascular network (cords). Involved in cellular migration and adhesion. Increases the phosphorylation levels of FAK. Interacts with and increases the mitogenic activity of HGF. Promotes synapse formation. The protein is Sushi repeat-containing protein SRPX2 (SRPX2) of Bos taurus (Bovine).